The following is an 801-amino-acid chain: Mediator of RNA polymerase II transcription subunit 25 (801 aa).

3 stretches are compositionally biased toward low complexity: residues 647-676 (PQQL…QPGA), 687-710 (PQLR…QQPL), and 722-735 (PHQA…HQAP). The tract at residues 647-735 (PQQLASQAPP…MGQQMQHQAP (89 aa)) is disordered. The short motif at 689 to 693 (LRNLL) is the LXXLL motif element.

Belongs to the Mediator complex subunit 25 family. As to quaternary structure, component of the Mediator complex.

Its subcellular location is the nucleus. Component of the Mediator complex, a coactivator involved in the regulated transcription of nearly all RNA polymerase II-dependent genes. Mediator functions as a bridge to convey information from gene-specific regulatory proteins to the basal RNA polymerase II transcription machinery. Mediator is recruited to promoters by direct interactions with regulatory proteins and serves as a scaffold for the assembly of a functional preinitiation complex with RNA polymerase II and the general transcription factors. The polypeptide is Mediator of RNA polymerase II transcription subunit 25 (med25) (Xenopus laevis (African clawed frog)).